A 314-amino-acid polypeptide reads, in one-letter code: 3'-5' exoribonuclease YhaM (314 aa).

Residues 163–279 form the HD domain; that stretch reads HVVSMLDLAK…LHYIDNLDAK (117 aa).

It belongs to the YhaM family.

In terms of biological role, shows a 3'-5' exoribonuclease activity. The polypeptide is 3'-5' exoribonuclease YhaM (Bacillus cereus (strain 03BB102)).